The sequence spans 631 residues: MAIFFLPLVLPGFAPRSEDSFKSPARFSWSYLNPSKLKKRSVGLSTETNAHGQAYFTLEGHKFMIVGGSIHYFRVPREYWKDRLLKLQACGFNTVTTYIPWNLHEQERGKFDFSEILDLEAYVLLAKTLGLWVILRPGPYICAEVDLGGLPSWLLRNPGSNLRTTNKDFIEAVDKYFDHLIPKILPLQYRRGGPVIAVQVENEYGSFRNDKNYMEYIKKALLNRGIVELLLTSDNESGIRIGSVKGALATINVNSFIKDSFVKLHRMQNDKPIMIMEYWTGWYDSWGSKHTEKSANEIRRTIYRFFSYGLSFNVYMFHGGTNFGFINGGYHENGHTNVVTSYDYDAVLSEAGDYTEKYFKLRKLFASGSARPLPPLPRLIPKAVYPSVNLSFYLPLFDILPYLNKPVMLETPVTMENLPINNGSGQPFGLVLYETSICFGGGLSASVHDSAQVFLNDKSIGILDENNEFLHIPKIQGCQLLRILVENQGRINFSWRIQSEQKGLNEAVTINGTLLRNFTIYSLDMKMSFFERLRSASWRIAPKTYKGPAFYWGSLNVGSFPTDTFLHLPNWHYGFVFINGRNLGRYWDIGPQKTLYLPGPWLHPEDNDVIVFEKIEKGFYIQTRKKPQLQN.

Glu203 functions as the Proton donor in the catalytic mechanism. Residue Glu277 is the Nucleophile of the active site.

It belongs to the glycosyl hydrolase 35 family.

This chain is Beta-galactosidase-1-like protein 3 (Glb1l3), found in Rattus norvegicus (Rat).